We begin with the raw amino-acid sequence, 181 residues long: UPF0301 protein COXBURSA331_A2219 (181 aa).

Belongs to the UPF0301 (AlgH) family.

In Coxiella burnetii (strain RSA 331 / Henzerling II), this protein is UPF0301 protein COXBURSA331_A2219.